Consider the following 289-residue polypeptide: Protoheme IX farnesyltransferase 2 (289 aa).

9 consecutive transmembrane segments (helical) span residues 4–24 (PGII…AAKG), 28–48 (LVLM…GCAI), 66–86 (RVTV…LALG), 99–118 (ALAL…VYSL), 124–144 (SVYG…VGYC), 155–175 (AILL…IAIF), 199–219 (LHIV…PLAG), 221–241 (TGIA…AMAL), and 256–276 (QVFG…ALDF).

Belongs to the UbiA prenyltransferase family. Protoheme IX farnesyltransferase subfamily.

It is found in the cell inner membrane. It catalyses the reaction heme b + (2E,6E)-farnesyl diphosphate + H2O = Fe(II)-heme o + diphosphate. It functions in the pathway porphyrin-containing compound metabolism; heme O biosynthesis; heme O from protoheme: step 1/1. Converts heme B (protoheme IX) to heme O by substitution of the vinyl group on carbon 2 of heme B porphyrin ring with a hydroxyethyl farnesyl side group. This is Protoheme IX farnesyltransferase 2 from Shewanella baltica (strain OS195).